A 640-amino-acid chain; its full sequence is Serine/threonine-protein kinase WNG1 (640 aa).

The first 70 residues, 1 to 70 (MPEQDLASGF…GVLCTVEAGA (70 aa)), serve as a signal peptide directing secretion. Disordered regions lie at residues 100–222 (PEVT…AQPT) and 237–280 (SHPD…DASN). Over residues 104-120 (HASSEGSPQFESSLSQQ) the composition is skewed to polar residues. Positions 124 to 141 (RPADRGEAHNGEEPRKDA) are enriched in basic and acidic residues. Residues 175 to 186 (QRQASSAAESLA) are compositionally biased toward low complexity. Over residues 248 to 279 (FSKKQEGRRERRLAVRGDDSFARGHNRDRDAS) the composition is skewed to basic and acidic residues. The 303-residue stretch at 291–593 (WAKIAALATG…LKQVMEDPYF (303 aa)) folds into the Protein kinase domain. Position 395 (K395) interacts with ATP. D486 serves as the catalytic Proton acceptor. Residues 609–640 (PFRGDFSIDDPDAGGKMYIPPSKEQDHEQENE) are disordered. A compositionally biased stretch (basic and acidic residues) spans 631 to 640 (KEQDHEQENE).

Belongs to the protein kinase superfamily. STE Ser/Thr protein kinase family. WNG subfamily. Mg(2+) is required as a cofactor.

It is found in the cytoplasmic granule. The protein localises to the secreted. It localises to the parasitophorous vacuole lumen. The catalysed reaction is L-seryl-[protein] + ATP = O-phospho-L-seryl-[protein] + ADP + H(+). It catalyses the reaction L-threonyl-[protein] + ATP = O-phospho-L-threonyl-[protein] + ADP + H(+). Its function is as follows. Serine/threonine-protein kinase which, at the tachyzoite stage, phosphorylates several parasitophorous vacuole (PV)-resident proteins such as GRA2, GRA6 and GRA7. By phosphorylating GRA2 and GRA6, regulates the formation of a functional intravacuolar network (IVN); IVN is composed of membranous tubules that bud from the PV membrane into the vacuolar lumen. Plays a role in the establishement of chronic infection in the host by controlling cyst formation in the host tissues. In Toxoplasma gondii, this protein is Serine/threonine-protein kinase WNG1.